A 208-amino-acid chain; its full sequence is Large ribosomal subunit protein uL3 (208 aa).

The interval 123–147 (RHGQSRGPMAHGSRYHRRPGSMGPV) is disordered.

The protein belongs to the universal ribosomal protein uL3 family. Part of the 50S ribosomal subunit. Forms a cluster with proteins L14 and L19.

One of the primary rRNA binding proteins, it binds directly near the 3'-end of the 23S rRNA, where it nucleates assembly of the 50S subunit. The polypeptide is Large ribosomal subunit protein uL3 (Streptococcus gordonii (strain Challis / ATCC 35105 / BCRC 15272 / CH1 / DL1 / V288)).